We begin with the raw amino-acid sequence, 148 residues long: Ribonuclease pancreatic (148 aa).

Positions 1-25 (MGLEKSLILLPLLVLVFGWVQPSLG) are cleaved as a signal peptide. Residues Lys32 and Arg35 each coordinate substrate. The active-site Proton acceptor is the His37. Cystine bridges form between Cys50–Cys108, Cys64–Cys119, Cys82–Cys134, and Cys89–Cys96. Asn58 carries N-linked (GlcNAc...) asparagine glycosylation. 65–69 (KPVNT) is a substrate binding site. Asn86 is a glycosylation site (N-linked (GlcNAc...) asparagine). Positions 90 and 109 each coordinate substrate. The Proton donor role is filled by His143.

It belongs to the pancreatic ribonuclease family. In terms of assembly, monomer. Interacts with and forms tight 1:1 complexes with RNH1. Dimerization of two such complexes may occur. Interaction with RNH1 inhibits this protein. In terms of tissue distribution, pancreas.

Its subcellular location is the secreted. It carries out the reaction an [RNA] containing cytidine + H2O = an [RNA]-3'-cytidine-3'-phosphate + a 5'-hydroxy-ribonucleotide-3'-[RNA].. It catalyses the reaction an [RNA] containing uridine + H2O = an [RNA]-3'-uridine-3'-phosphate + a 5'-hydroxy-ribonucleotide-3'-[RNA].. Functionally, endonuclease that catalyzes the cleavage of RNA on the 3' side of pyrimidine nucleotides. Acts on single-stranded and double-stranded RNA. This is Ribonuclease pancreatic (RNASE1) from Myodes glareolus (Bank vole).